The chain runs to 331 residues: MTTAAALSVLRLGTRRSTLARAQTEEIAGALRAAGCRVEIVGIQSTGDRHADVPLHEFAGSGVFVAELRAALLRGEVDVVVHSMKDLPTAEIPELAIAAIPRRADPRDALVTGAGCRLAELPTGAIVGTGSPRRAAQLRLLRPDLEIRPIRGNLDTRLGKLHAGGYAALIVAAAGLARLHRSEEAAEFFDPTVMLPAPGQGALAVECRRADIADGGRLAGILAGLDDPATRAAVTAERALLAAVGAGCSAPVGALGVVTADTLQLDAVVVDPSGTTAFRRSLTGTPDDASDLGRRLAADLIRAGADQLLQAPKQTGEPHDPDRHDKGTGRP.

Cys248 carries the S-(dipyrrolylmethanemethyl)cysteine modification. The interval 307–331 (QLLQAPKQTGEPHDPDRHDKGTGRP) is disordered. Over residues 316 to 331 (GEPHDPDRHDKGTGRP) the composition is skewed to basic and acidic residues.

This sequence belongs to the HMBS family. As to quaternary structure, monomer. It depends on dipyrromethane as a cofactor.

The enzyme catalyses 4 porphobilinogen + H2O = hydroxymethylbilane + 4 NH4(+). Its pathway is porphyrin-containing compound metabolism; protoporphyrin-IX biosynthesis; coproporphyrinogen-III from 5-aminolevulinate: step 2/4. In terms of biological role, tetrapolymerization of the monopyrrole PBG into the hydroxymethylbilane pre-uroporphyrinogen in several discrete steps. The chain is Porphobilinogen deaminase from Acidothermus cellulolyticus (strain ATCC 43068 / DSM 8971 / 11B).